The sequence spans 181 residues: ATP synthase subunit delta (181 aa).

Belongs to the ATPase delta chain family. As to quaternary structure, F-type ATPases have 2 components, F(1) - the catalytic core - and F(0) - the membrane proton channel. F(1) has five subunits: alpha(3), beta(3), gamma(1), delta(1), epsilon(1). F(0) has three main subunits: a(1), b(2) and c(10-14). The alpha and beta chains form an alternating ring which encloses part of the gamma chain. F(1) is attached to F(0) by a central stalk formed by the gamma and epsilon chains, while a peripheral stalk is formed by the delta and b chains.

Its subcellular location is the cell inner membrane. Functionally, f(1)F(0) ATP synthase produces ATP from ADP in the presence of a proton or sodium gradient. F-type ATPases consist of two structural domains, F(1) containing the extramembraneous catalytic core and F(0) containing the membrane proton channel, linked together by a central stalk and a peripheral stalk. During catalysis, ATP synthesis in the catalytic domain of F(1) is coupled via a rotary mechanism of the central stalk subunits to proton translocation. In terms of biological role, this protein is part of the stalk that links CF(0) to CF(1). It either transmits conformational changes from CF(0) to CF(1) or is implicated in proton conduction. The protein is ATP synthase subunit delta of Hyphomonas neptunium (strain ATCC 15444).